The sequence spans 452 residues: 3-phosphoshikimate 1-carboxyvinyltransferase (452 aa).

3-phosphoshikimate-binding residues include lysine 24, serine 25, and arginine 29. Lysine 24 lines the phosphoenolpyruvate pocket. Phosphoenolpyruvate contacts are provided by glycine 95 and arginine 123. Serine 167, glutamine 169, aspartate 319, and lysine 346 together coordinate 3-phosphoshikimate. Glutamine 169 contacts phosphoenolpyruvate. Aspartate 319 acts as the Proton acceptor in catalysis. The phosphoenolpyruvate site is built by arginine 350 and arginine 394.

The protein belongs to the EPSP synthase family. Monomer.

Its subcellular location is the cytoplasm. It carries out the reaction 3-phosphoshikimate + phosphoenolpyruvate = 5-O-(1-carboxyvinyl)-3-phosphoshikimate + phosphate. The protein operates within metabolic intermediate biosynthesis; chorismate biosynthesis; chorismate from D-erythrose 4-phosphate and phosphoenolpyruvate: step 6/7. Functionally, catalyzes the transfer of the enolpyruvyl moiety of phosphoenolpyruvate (PEP) to the 5-hydroxyl of shikimate-3-phosphate (S3P) to produce enolpyruvyl shikimate-3-phosphate and inorganic phosphate. This chain is 3-phosphoshikimate 1-carboxyvinyltransferase, found in Phenylobacterium zucineum (strain HLK1).